A 190-amino-acid polypeptide reads, in one-letter code: MSQLRPAVFLVLLLTLITGLLYPLLTTTLAQWMFPQQANGSLLLEQGSVRGSAPIGQSFSRADYFQGRPSATSDRPYNPLASSGSNLAGSNPALDQAVSQRVAALRAANPQAGQQVPVDLVTASASGLDPQISPQAAYWQADRIAAARRLPREVVKRLIDENTTTPMPAFLGEPAVNVLALNLALDALQR.

Residues 6 to 26 form a helical membrane-spanning segment; sequence PAVFLVLLLTLITGLLYPLLT. The interval 67 to 88 is disordered; the sequence is GRPSATSDRPYNPLASSGSNLA. Residues 69-88 are compositionally biased toward polar residues; sequence PSATSDRPYNPLASSGSNLA.

The protein belongs to the KdpC family. In terms of assembly, the system is composed of three essential subunits: KdpA, KdpB and KdpC.

It is found in the cell inner membrane. Functionally, part of the high-affinity ATP-driven potassium transport (or Kdp) system, which catalyzes the hydrolysis of ATP coupled with the electrogenic transport of potassium into the cytoplasm. This subunit acts as a catalytic chaperone that increases the ATP-binding affinity of the ATP-hydrolyzing subunit KdpB by the formation of a transient KdpB/KdpC/ATP ternary complex. The chain is Potassium-transporting ATPase KdpC subunit from Erwinia tasmaniensis (strain DSM 17950 / CFBP 7177 / CIP 109463 / NCPPB 4357 / Et1/99).